The chain runs to 370 residues: Uroporphyrinogen decarboxylase (370 aa).

Substrate contacts are provided by residues 29 to 33 (RQAGR), aspartate 79, tyrosine 155, serine 210, and histidine 342.

Belongs to the uroporphyrinogen decarboxylase family. As to quaternary structure, homodimer.

Its subcellular location is the cytoplasm. It catalyses the reaction uroporphyrinogen III + 4 H(+) = coproporphyrinogen III + 4 CO2. The protein operates within porphyrin-containing compound metabolism; protoporphyrin-IX biosynthesis; coproporphyrinogen-III from 5-aminolevulinate: step 4/4. In terms of biological role, catalyzes the decarboxylation of four acetate groups of uroporphyrinogen-III to yield coproporphyrinogen-III. This chain is Uroporphyrinogen decarboxylase, found in Delftia acidovorans (strain DSM 14801 / SPH-1).